The chain runs to 520 residues: 2-isopropylmalate synthase (520 aa).

The Pyruvate carboxyltransferase domain occupies 12–274; sequence IRIFDTTLRD…DSAINTPRIV (263 aa). Residues Asp-21, His-209, His-211, and Asn-245 each coordinate Mn(2+). Residues 396-520 form a regulatory domain region; the sequence is RLASMTISDV…VIAGKTAAVA (125 aa).

Belongs to the alpha-IPM synthase/homocitrate synthase family. LeuA type 1 subfamily. Homodimer. The cofactor is Mn(2+).

Its subcellular location is the cytoplasm. The catalysed reaction is 3-methyl-2-oxobutanoate + acetyl-CoA + H2O = (2S)-2-isopropylmalate + CoA + H(+). The protein operates within amino-acid biosynthesis; L-leucine biosynthesis; L-leucine from 3-methyl-2-oxobutanoate: step 1/4. Catalyzes the condensation of the acetyl group of acetyl-CoA with 3-methyl-2-oxobutanoate (2-ketoisovalerate) to form 3-carboxy-3-hydroxy-4-methylpentanoate (2-isopropylmalate). The polypeptide is 2-isopropylmalate synthase (Xanthomonas oryzae pv. oryzae (strain KACC10331 / KXO85)).